Here is a 227-residue protein sequence, read N- to C-terminus: Cytochrome c oxidase subunit 2 (227 aa).

Topologically, residues 1 to 14 (MAYPFQLGLQDATS) are mitochondrial intermembrane. A helical membrane pass occupies residues 15-45 (PIMEELLHFHDHTLMIVFLISSLVLYIISLM). Over 46–59 (LTTKLTHTSTMDAQ) the chain is Mitochondrial matrix. The chain crosses the membrane as a helical span at residues 60–87 (EVETVWTILPAIILILIALPSLRILYMM). The Mitochondrial intermembrane segment spans residues 88 to 227 (DEINNPSLTV…YFETWSAVMV (140 aa)). The Cu cation site is built by histidine 161, cysteine 196, glutamate 198, cysteine 200, histidine 204, and methionine 207. Glutamate 198 contacts Mg(2+). Tyrosine 218 bears the Phosphotyrosine mark.

It belongs to the cytochrome c oxidase subunit 2 family. Component of the cytochrome c oxidase (complex IV, CIV), a multisubunit enzyme composed of 14 subunits. The complex is composed of a catalytic core of 3 subunits MT-CO1, MT-CO2 and MT-CO3, encoded in the mitochondrial DNA, and 11 supernumerary subunits COX4I, COX5A, COX5B, COX6A, COX6B, COX6C, COX7A, COX7B, COX7C, COX8 and NDUFA4, which are encoded in the nuclear genome. The complex exists as a monomer or a dimer and forms supercomplexes (SCs) in the inner mitochondrial membrane with NADH-ubiquinone oxidoreductase (complex I, CI) and ubiquinol-cytochrome c oxidoreductase (cytochrome b-c1 complex, complex III, CIII), resulting in different assemblies (supercomplex SCI(1)III(2)IV(1) and megacomplex MCI(2)III(2)IV(2)). Found in a complex with TMEM177, COA6, COX18, COX20, SCO1 and SCO2. Interacts with TMEM177 in a COX20-dependent manner. Interacts with COX20. Interacts with COX16. Requires Cu cation as cofactor.

Its subcellular location is the mitochondrion inner membrane. It carries out the reaction 4 Fe(II)-[cytochrome c] + O2 + 8 H(+)(in) = 4 Fe(III)-[cytochrome c] + 2 H2O + 4 H(+)(out). Component of the cytochrome c oxidase, the last enzyme in the mitochondrial electron transport chain which drives oxidative phosphorylation. The respiratory chain contains 3 multisubunit complexes succinate dehydrogenase (complex II, CII), ubiquinol-cytochrome c oxidoreductase (cytochrome b-c1 complex, complex III, CIII) and cytochrome c oxidase (complex IV, CIV), that cooperate to transfer electrons derived from NADH and succinate to molecular oxygen, creating an electrochemical gradient over the inner membrane that drives transmembrane transport and the ATP synthase. Cytochrome c oxidase is the component of the respiratory chain that catalyzes the reduction of oxygen to water. Electrons originating from reduced cytochrome c in the intermembrane space (IMS) are transferred via the dinuclear copper A center (CU(A)) of subunit 2 and heme A of subunit 1 to the active site in subunit 1, a binuclear center (BNC) formed by heme A3 and copper B (CU(B)). The BNC reduces molecular oxygen to 2 water molecules using 4 electrons from cytochrome c in the IMS and 4 protons from the mitochondrial matrix. The protein is Cytochrome c oxidase subunit 2 (MT-CO2) of Lycalopex culpaeus (Culpeo fox).